The sequence spans 214 residues: Adenylate kinase (214 aa).

10 to 15 (GAGKGT) provides a ligand contact to ATP. The segment at 30-59 (STGDMLRAAIKAGTELGKQAKAVIDAGQLV) is NMP. AMP contacts are provided by residues Thr31, Arg36, 57–59 (QLV), 85–88 (GFPR), and Gln92. The segment at 122–159 (GRRAHLPSGRTYHVVYNPPKVEGKDDVTGEDLVVRDDD) is LID. ATP contacts are provided by residues Arg123 and 132 to 133 (TY). Residues Arg156 and Arg167 each contribute to the AMP site. Lys200 is an ATP binding site.

The protein belongs to the adenylate kinase family. In terms of assembly, monomer.

It localises to the cytoplasm. It carries out the reaction AMP + ATP = 2 ADP. It functions in the pathway purine metabolism; AMP biosynthesis via salvage pathway; AMP from ADP: step 1/1. Catalyzes the reversible transfer of the terminal phosphate group between ATP and AMP. Plays an important role in cellular energy homeostasis and in adenine nucleotide metabolism. The protein is Adenylate kinase of Vibrio campbellii (strain ATCC BAA-1116).